The chain runs to 118 residues: Movement protein TGB2 (118 aa).

The Cytoplasmic portion of the chain corresponds to 1–11 (MSREITARPNK). A helical membrane pass occupies residues 12–32 (NVPIVVGVCVVAFFVLLAFMQ). The Lumenal portion of the chain corresponds to 33-81 (QKHKTHSGGDYGVPTFSNGGKYRDGTRSADFNSNNHRAYGCGGSGGSVS). Residues 82–102 (SRVGQQLVVLAIVSVLIVSLL) form a helical membrane-spanning segment. Residues 103–118 (QRLRSPPEHICNGACG) lie on the Cytoplasmic side of the membrane.

The protein belongs to the virgaviridae/benyvirus TGB2 movement protein family. Interacts with movement protein TGB3.

The protein localises to the host cell junction. It localises to the host plasmodesma. Its subcellular location is the host endoplasmic reticulum membrane. In terms of biological role, participates in the transport of viral RNA to the plasmodesmata. Is probably targeted to plasmodesmata by TGBp3, along with viral RNAs-TGBp1 (RNP complex). Can gate plasmodesmata and increase their size exclusion limit. The protein is Movement protein TGB2 of Beet necrotic yellow vein virus (isolate Japan/S) (BNYVV).